We begin with the raw amino-acid sequence, 4621 residues long: Dynein axonemal heavy chain 5 (4621 aa).

Residues 1 to 1938 (MFRIGRRQLW…MIHITDVAFI (1938 aa)) form a stem region. Coiled-coil stretches lie at residues 260 to 305 (WIKQ…DQLK) and 803 to 825 (LENA…DLIE). The segment at 901-921 (VCHENASPSGNTSGRREGHSE) is disordered. Coiled coils occupy residues 1065-1094 (AVKN…SINL) and 1433-1462 (DVNI…DWQA). AAA stretches follow at residues 1939 to 2161 (YQNE…VLRT), 2221 to 2440 (TAIS…IQNL), 2547 to 2800 (VYPP…IWQG), and 2913 to 3167 (LYNE…FRRS). ATP contacts are provided by residues 1977–1984 (GPAGTGKT) and 2259–2266 (GPSGSGKT). Residues 3182–3479 (YKFIYEEKHM…QTLLEDADRC (298 aa)) are stalk. Coiled coils occupy residues 3186–3299 (YEEK…QTIK), 3423–3490 (LKAN…STLI), and 3729–3814 (ILTE…EEYR). 2 AAA regions span residues 3564–3794 (LIDA…EVTQ) and 4009–4223 (ARKY…FIQN). A coiled-coil region spans residues 4389 to 4417 (FLRQEIDRMQRVLSLVRSTLTELKLAVDG).

Belongs to the dynein heavy chain family. In terms of assembly, interacts with DNAL1. Consists of at least two heavy chains and a number of intermediate and light chains. Strongly expressed in lung and kidney and weaker expression seen in brain, heart and testis. In the brain, expressed in ependymal cells lining the brain ventricles and the aqueduct.

The protein resides in the cytoplasm. The protein localises to the cytoskeleton. It localises to the cilium axoneme. Force generating protein of respiratory cilia. Produces force towards the minus ends of microtubules. Dynein has ATPase activity; the force-producing power stroke is thought to occur on release of ADP. Required for structural and functional integrity of the cilia of ependymal cells lining the brain ventricles. The protein is Dynein axonemal heavy chain 5 of Mus musculus (Mouse).